A 141-amino-acid chain; its full sequence is Lutropin subunit beta (141 aa).

A signal peptide spans 1–22 (MERYQELTVLLLLLLLEGGSWG). 6 disulfide bridges follow: C30/C78, C44/C93, C47/C131, C55/C109, C59/C111, and C114/C121. A glycan (N-linked (GlcNAc...) asparagine) is linked at N34.

This sequence belongs to the glycoprotein hormones subunit beta family. In terms of assembly, heterodimer of a common alpha chain and a unique beta chain which confers biological specificity to thyrotropin, lutropin, follitropin and gonadotropin.

It localises to the secreted. Functionally, promotes spermatogenesis and ovulation by stimulating the testes and ovaries to synthesize steroids. This is Lutropin subunit beta (LHB) from Trichosurus vulpecula (Brush-tailed possum).